The chain runs to 280 residues: Ribonuclease P protein subunit p38 (280 aa).

Alanine 2 is modified (N-acetylalanine). Phosphoserine occurs at positions 12, 221, and 230. The segment at 202-227 (WLPDRTQGPTDSLETEPSESQDNEIL) is disordered. The span at 214-226 (LETEPSESQDNEI) shows a compositional bias: acidic residues. A disordered region spans residues 254–280 (QPLKIKKLIPNPSKIRKPPKSKKSISK). Basic residues predominate over residues 267 to 280 (KIRKPPKSKKSISK).

Belongs to the eukaryotic ribosomal protein eL8 family. In terms of assembly, component of nuclear RNase P and RNase MRP ribonucleoproteins. RNase P consists of a catalytic RNA moiety and about 10 protein subunits; POP1, POP4, POP5, POP7, RPP14, RPP21, RPP25, RPP30, RPP38 and RPP40. Within the RNase P complex, POP1, POP7 and RPP25 form the 'finger' subcomplex, POP5, RPP14, RPP40 and homodimeric RPP30 form the 'palm' subcomplex, and RPP21, POP4 and RPP38 form the 'wrist' subcomplex. All subunits of the RNase P complex interact with the catalytic RNA. Several subunits of RNase P are also part of the RNase MRP complex. RNase MRP consists of a catalytic RNA moiety and about 8 protein subunits; POP1, POP7, RPP25, RPP30, RPP38, RPP40 and possibly also POP4 and POP5.

The protein localises to the nucleus. Its subcellular location is the nucleolus. Component of ribonuclease P, a ribonucleoprotein complex that generates mature tRNA molecules by cleaving their 5'-ends. Also a component of the MRP ribonuclease complex, which cleaves pre-rRNA sequences. This is Ribonuclease P protein subunit p38 (Rpp38) from Mus musculus (Mouse).